A 134-amino-acid polypeptide reads, in one-letter code: MPPKTRSGARRGGRRVVKKNVAAGHAYIKSTFNNTIVSITDPHGAVISWASSGHVGFKGSRKSTPFAAQMAAENAARKAMDHGMKKVDVFVKGPGSGRETAIRSLQAAGLEVSSITDATPQPHNGCRPTKRRKV.

A compositionally biased stretch (polar residues) spans Ser-113–Pro-122. The tract at residues Ser-113–Val-134 is disordered.

It belongs to the universal ribosomal protein uS11 family. Part of the 30S ribosomal subunit. Interacts with proteins S7 and S18. Binds to IF-3.

Functionally, located on the platform of the 30S subunit, it bridges several disparate RNA helices of the 16S rRNA. Forms part of the Shine-Dalgarno cleft in the 70S ribosome. The chain is Small ribosomal subunit protein uS11 from Corynebacterium aurimucosum (strain ATCC 700975 / DSM 44827 / CIP 107346 / CN-1) (Corynebacterium nigricans).